Reading from the N-terminus, the 311-residue chain is Acetyl-coenzyme A carboxylase carboxyl transferase subunit alpha (311 aa).

The region spanning 36-286 is the CoA carboxyltransferase C-terminal domain; it reads KLEKEVEKTF…KEYFIKSLAE (251 aa).

Belongs to the AccA family. Acetyl-CoA carboxylase is a heterohexamer composed of biotin carboxyl carrier protein (AccB), biotin carboxylase (AccC) and two subunits each of ACCase subunit alpha (AccA) and ACCase subunit beta (AccD).

It localises to the cytoplasm. The catalysed reaction is N(6)-carboxybiotinyl-L-lysyl-[protein] + acetyl-CoA = N(6)-biotinyl-L-lysyl-[protein] + malonyl-CoA. It functions in the pathway lipid metabolism; malonyl-CoA biosynthesis; malonyl-CoA from acetyl-CoA: step 1/1. Functionally, component of the acetyl coenzyme A carboxylase (ACC) complex. First, biotin carboxylase catalyzes the carboxylation of biotin on its carrier protein (BCCP) and then the CO(2) group is transferred by the carboxyltransferase to acetyl-CoA to form malonyl-CoA. The polypeptide is Acetyl-coenzyme A carboxylase carboxyl transferase subunit alpha (Aliarcobacter butzleri (strain RM4018) (Arcobacter butzleri)).